Consider the following 341-residue polypeptide: UDP-glucose 4-epimerase (341 aa).

The protein belongs to the polysaccharide synthase family.

The enzyme catalyses UDP-alpha-D-glucose = UDP-alpha-D-galactose. Functionally, epimerizes UDP-galactose to UDP-glucose. The protein is UDP-glucose 4-epimerase (capD) of Rickettsia typhi (strain ATCC VR-144 / Wilmington).